The sequence spans 397 residues: Acetate kinase (397 aa).

Asn-8 provides a ligand contact to Mg(2+). ATP is bound at residue Lys-15. Arg-89 is a substrate binding site. Asp-146 acts as the Proton donor/acceptor in catalysis. Residues 206–210 (HLGNG), 281–283 (DLR), and 329–333 (GVGEN) contribute to the ATP site. Glu-382 serves as a coordination point for Mg(2+).

Belongs to the acetokinase family. Homodimer. The cofactor is Mg(2+). Requires Mn(2+) as cofactor.

It is found in the cytoplasm. It carries out the reaction acetate + ATP = acetyl phosphate + ADP. It functions in the pathway metabolic intermediate biosynthesis; acetyl-CoA biosynthesis; acetyl-CoA from acetate: step 1/2. Its function is as follows. Catalyzes the formation of acetyl phosphate from acetate and ATP. Can also catalyze the reverse reaction. This Bacillus cereus (strain ATCC 10987 / NRS 248) protein is Acetate kinase.